The chain runs to 1279 residues: Botulinum-like toxin eBoNT/J (1279 aa).

His225 serves as a coordination point for Zn(2+). Glu226 is a catalytic residue. Zn(2+)-binding residues include His229 and Glu269. Cys424 and Cys438 are oxidised to a cystine. The tract at residues 435–843 (LSSCIEILED…RLTSLPVFNL (409 aa)) is translocation domain (TD). Positions 476 to 525 (ADTILDSTLSNYDFSKEINFTSTVPIITVEDPLETDEDVPVISEDRTVYV) are belt; not required for channel formation. The segment at 860 to 1080 (IDIQDSEVLN…EVNRLYWKYF (221 aa)) is N-terminus of receptor binding domain (N-RBD). Residues 1081 to 1279 (EGSYLRDVWG…IPVDEGWKED (199 aa)) form a C-terminus of receptor binding domain (C-RBD) region. Residues 1250–1253 (SAWY) carry the Host ganglioside-binding motif motif.

The protein belongs to the peptidase M27 family. In terms of assembly, might be a disulfide-linked heterodimer of a light chain (LC) and heavy chain (HC). Zn(2+) is required as a cofactor.

The protein localises to the secreted. It is found in the host cytoplasm. It localises to the host cytosol. The protein resides in the host cell membrane. Its subcellular location is the host cytoplasmic vesicle membrane. The catalysed reaction is Limited hydrolysis of proteins of the neuroexocytosis apparatus, synaptobrevins, SNAP25 or syntaxin. No detected action on small molecule substrates.. Its function is as follows. Strongly resembles a botulinum-type toxin, with the appropriate domains and residues to have proteolytic function, although its C-terminus (which binds to a eukaryotic host cell) is different enough from clostrial botulinum toxins that it might bind another cell target. Might be a precursor of a toxin that binds to an unknown eukaryotic cell receptor(s), and be taken up into the host cell via the endocytic pathway. When the pH of the putative toxin-containing endosome drops a structural rearrangement occurs so that the N-terminus of the heavy chain forms pores that allows the light chain to translocate into the cytosol. Once in the cytosol the disulfide bond linking the 2 subunits is reduced and light chain cleaves its target protein. The polypeptide is Botulinum-like toxin eBoNT/J (Enterococcus sp. (strain 3G1_DIV0629)).